Reading from the N-terminus, the 147-residue chain is Myoglobin (147 aa).

Residues 2–141 (ADFDAVLKCW…IIADLEANYK (140 aa)) form the Globin domain. Residue histidine 60 participates in nitrite binding. Histidine 60 serves as a coordination point for O2. Histidine 89 serves as a coordination point for heme b.

This sequence belongs to the globin family. As to quaternary structure, monomeric.

The protein localises to the cytoplasm. It localises to the sarcoplasm. The catalysed reaction is Fe(III)-heme b-[protein] + nitric oxide + H2O = Fe(II)-heme b-[protein] + nitrite + 2 H(+). It catalyses the reaction H2O2 + AH2 = A + 2 H2O. Monomeric heme protein which primary function is to store oxygen and facilitate its diffusion within muscle tissues. Reversibly binds oxygen through a pentacoordinated heme iron and enables its timely and efficient release as needed during periods of heightened demand. Depending on the oxidative conditions of tissues and cells, and in addition to its ability to bind oxygen, it also has a nitrite reductase activity whereby it regulates the production of bioactive nitric oxide. Under stress conditions, like hypoxia and anoxia, it also protects cells against reactive oxygen species thanks to its pseudoperoxidase activity. This Thunnus obesus (Bigeye tuna) protein is Myoglobin (mb).